Consider the following 443-residue polypeptide: Arginine biosynthesis bifunctional protein ArgJ, mitochondrial (443 aa).

Substrate is bound by residues Thr-179, Lys-206, Thr-217, Glu-303, Asn-438, and Ser-443. The active-site Nucleophile is Thr-217.

The protein belongs to the ArgJ family. Heterodimer of an alpha and a beta chain. Post-translationally, the alpha and beta chains are autoproteolytically processed from a single precursor protein within the mitochondrion.

The protein resides in the mitochondrion matrix. It carries out the reaction N(2)-acetyl-L-ornithine + L-glutamate = N-acetyl-L-glutamate + L-ornithine. The enzyme catalyses L-glutamate + acetyl-CoA = N-acetyl-L-glutamate + CoA + H(+). It functions in the pathway amino-acid biosynthesis; L-arginine biosynthesis; L-ornithine and N-acetyl-L-glutamate from L-glutamate and N(2)-acetyl-L-ornithine (cyclic): step 1/1. Its pathway is amino-acid biosynthesis; L-arginine biosynthesis; N(2)-acetyl-L-ornithine from L-glutamate: step 1/4. Its function is as follows. Catalyzes two activities which are involved in the cyclic version of arginine biosynthesis: the synthesis of acetylglutamate from glutamate and acetyl-CoA, and of ornithine by transacetylation between acetylornithine and glutamate. The sequence is that of Arginine biosynthesis bifunctional protein ArgJ, mitochondrial from Eremothecium gossypii (strain ATCC 10895 / CBS 109.51 / FGSC 9923 / NRRL Y-1056) (Yeast).